Here is a 361-residue protein sequence, read N- to C-terminus: Putative geranylgeranyl pyrophosphate synthase 8, chloroplastic (361 aa).

The N-terminal 39 residues, 1–39, are a transit peptide targeting the chloroplast; sequence MATTVHLSSFSLFIQSRGRRDNSISSVKSLKKRTGLSPS. The interval 24–58 is disordered; sequence ISSVKSLKKRTGLSPSSALTSQGGRDMIPPQGKSN. Polar residues predominate over residues 36 to 46; sequence LSPSSALTSQG. Isopentenyl diphosphate contacts are provided by K107, R110, and H139. Mg(2+) is bound by residues D146 and D152. A dimethylallyl diphosphate-binding site is contributed by R157. R158 contributes to the isopentenyl diphosphate binding site. Dimethylallyl diphosphate is bound by residues K246, T247, Q284, K301, and K311.

It belongs to the FPP/GGPP synthase family. In terms of assembly, monomer. The cofactor is Mg(2+).

The protein localises to the plastid. The protein resides in the chloroplast. It catalyses the reaction isopentenyl diphosphate + dimethylallyl diphosphate = (2E)-geranyl diphosphate + diphosphate. It carries out the reaction isopentenyl diphosphate + (2E)-geranyl diphosphate = (2E,6E)-farnesyl diphosphate + diphosphate. The enzyme catalyses isopentenyl diphosphate + (2E,6E)-farnesyl diphosphate = (2E,6E,10E)-geranylgeranyl diphosphate + diphosphate. The protein operates within isoprenoid biosynthesis; farnesyl diphosphate biosynthesis; farnesyl diphosphate from geranyl diphosphate and isopentenyl diphosphate: step 1/1. It functions in the pathway isoprenoid biosynthesis; geranyl diphosphate biosynthesis; geranyl diphosphate from dimethylallyl diphosphate and isopentenyl diphosphate: step 1/1. It participates in isoprenoid biosynthesis; geranylgeranyl diphosphate biosynthesis; geranylgeranyl diphosphate from farnesyl diphosphate and isopentenyl diphosphate: step 1/1. Functionally, catalyzes the trans-addition of the three molecules of IPP onto DMAPP to form geranylgeranyl pyrophosphate. This is Putative geranylgeranyl pyrophosphate synthase 8, chloroplastic from Arabidopsis thaliana (Mouse-ear cress).